Consider the following 36-residue polypeptide: Serum amyloid P-component (36 aa).

One can recognise a Pentraxin (PTX) domain in the interval 6–36 (SGKVFVIPMATSTSHVKLHARVSEPISAMTM).

The protein belongs to the pentraxin family. As to quaternary structure, homopentamer. Discoid arrangement of 5 covalently bound subunits. Requires Ca(2+) as cofactor.

The protein resides in the secreted. In Salmo salar (Atlantic salmon), this protein is Serum amyloid P-component.